Consider the following 279-residue polypeptide: Ribose-phosphate pyrophosphokinase (279 aa).

ATP is bound by residues 31-33 and 88-89; these read DGE and RQ. Residues His-121 and Asp-159 each contribute to the Mg(2+) site. Lys-182 is an active-site residue. D-ribose 5-phosphate is bound by residues Arg-184, Asp-208, and 212-216; that span reads STGGT.

This sequence belongs to the ribose-phosphate pyrophosphokinase family. Class III (archaeal) subfamily. Mg(2+) serves as cofactor.

The protein localises to the cytoplasm. The enzyme catalyses D-ribose 5-phosphate + ATP = 5-phospho-alpha-D-ribose 1-diphosphate + AMP + H(+). It functions in the pathway metabolic intermediate biosynthesis; 5-phospho-alpha-D-ribose 1-diphosphate biosynthesis; 5-phospho-alpha-D-ribose 1-diphosphate from D-ribose 5-phosphate (route I): step 1/1. Its function is as follows. Involved in the biosynthesis of the central metabolite phospho-alpha-D-ribosyl-1-pyrophosphate (PRPP) via the transfer of pyrophosphoryl group from ATP to 1-hydroxyl of ribose-5-phosphate (Rib-5-P). The polypeptide is Ribose-phosphate pyrophosphokinase (Pyrococcus furiosus (strain ATCC 43587 / DSM 3638 / JCM 8422 / Vc1)).